A 53-amino-acid chain; its full sequence is Kunitz-type trypsin inhibitor alpha chain (53 aa).

Residues Gly-33–Arg-53 are disordered.

The protein belongs to the protease inhibitor I3 (leguminous Kunitz-type inhibitor) family. As to quaternary structure, heterodimer of an alpha and a beta chain linked by a disulfide bond.

In terms of biological role, inhibits trypsin with a Ki of 0.25 uM. Inhibits the trypsin-like proteases in midguts of larval H.armigera, S.exigua, and P.rapae. The polypeptide is Kunitz-type trypsin inhibitor alpha chain (Albizia kalkora (Kalkora mimosa)).